The sequence spans 179 residues: uncharacterized protein (179 aa).

Positions 1–15 are enriched in basic and acidic residues; it reads MQRQTGHMEDKKRTG. The interval 1–32 is disordered; sequence MQRQTGHMEDKKRTGLESQGTENAFSDGRDGK.

This is an uncharacterized protein from Gallus gallus (Chicken).